The following is a 557-amino-acid chain: Aspartate--tRNA ligase (557 aa).

An L-aspartate-binding site is contributed by glutamate 168. Residues 192 to 195 are aspartate; that stretch reads QIYK. Arginine 214 is an L-aspartate binding site. ATP is bound by residues 214–216 and glutamine 223; that span reads RDE. Histidine 423 is a binding site for L-aspartate. Glutamate 457 serves as a coordination point for ATP. Residue arginine 464 coordinates L-aspartate. 505 to 508 provides a ligand contact to ATP; it reads GLDR.

The protein belongs to the class-II aminoacyl-tRNA synthetase family. Type 1 subfamily. In terms of assembly, homodimer.

The protein localises to the cytoplasm. The enzyme catalyses tRNA(Asp) + L-aspartate + ATP = L-aspartyl-tRNA(Asp) + AMP + diphosphate. Its function is as follows. Catalyzes the attachment of L-aspartate to tRNA(Asp) in a two-step reaction: L-aspartate is first activated by ATP to form Asp-AMP and then transferred to the acceptor end of tRNA(Asp). This chain is Aspartate--tRNA ligase, found in Mycoplasma pneumoniae (strain ATCC 29342 / M129 / Subtype 1) (Mycoplasmoides pneumoniae).